The chain runs to 178 residues: ATP-dependent protease subunit HslV (178 aa).

Threonine 7 is a catalytic residue. Na(+)-binding residues include glycine 162, cysteine 165, and threonine 168.

The protein belongs to the peptidase T1B family. HslV subfamily. A double ring-shaped homohexamer of HslV is capped on each side by a ring-shaped HslU homohexamer. The assembly of the HslU/HslV complex is dependent on binding of ATP.

The protein resides in the cytoplasm. It catalyses the reaction ATP-dependent cleavage of peptide bonds with broad specificity.. Its activity is regulated as follows. Allosterically activated by HslU binding. Protease subunit of a proteasome-like degradation complex believed to be a general protein degrading machinery. In Burkholderia mallei (strain ATCC 23344), this protein is ATP-dependent protease subunit HslV.